The chain runs to 144 residues: EF-hand calcium-binding domain-containing protein 8 (144 aa).

EF-hand domains are found at residues 52 to 86 (IHLAKIEKMFEEDINSTGALGMDAFIKAMKKVLSS) and 87 to 122 (VSDEMLKELFLKVDSDCEGFVTWQKYVDYMMREFQG).

This chain is EF-hand calcium-binding domain-containing protein 8 (EFCAB8), found in Homo sapiens (Human).